We begin with the raw amino-acid sequence, 62 residues long: Phospholipase A2 superbin a (62 aa).

The Ca(2+) site is built by tyrosine 28, glycine 30, and glycine 32. Cysteines 29 and 45 form a disulfide. The active site involves histidine 48. Residue aspartate 49 coordinates Ca(2+).

Ca(2+) serves as cofactor. As to expression, expressed by the venom gland.

The protein resides in the secreted. It catalyses the reaction a 1,2-diacyl-sn-glycero-3-phosphocholine + H2O = a 1-acyl-sn-glycero-3-phosphocholine + a fatty acid + H(+). Snake venom phospholipase A2 (PLA2) that inhibits collagen-induced platelet aggregation. In terms of inhibition of platelet aggregation, superbin a is more potent as superbin b, c, and d. PLA2 catalyzes the calcium-dependent hydrolysis of the 2-acyl groups in 3-sn-phosphoglycerides. The sequence is that of Phospholipase A2 superbin a from Austrelaps superbus (Lowland copperhead snake).